Consider the following 285-residue polypeptide: Glutamate racemase (285 aa).

Substrate is bound by residues 28–29 (DS) and 60–61 (YG). Catalysis depends on C92, which acts as the Proton donor/acceptor. Residue 93-94 (NT) coordinates substrate. C204 acts as the Proton donor/acceptor in catalysis. Residue 205–206 (TH) coordinates substrate.

This sequence belongs to the aspartate/glutamate racemases family.

The enzyme catalyses L-glutamate = D-glutamate. The protein operates within cell wall biogenesis; peptidoglycan biosynthesis. Provides the (R)-glutamate required for cell wall biosynthesis. This is Glutamate racemase from Escherichia fergusonii (strain ATCC 35469 / DSM 13698 / CCUG 18766 / IAM 14443 / JCM 21226 / LMG 7866 / NBRC 102419 / NCTC 12128 / CDC 0568-73).